Consider the following 263-residue polypeptide: Hydroxyethylthiazole kinase (263 aa).

Met-41 contacts substrate. Residues Arg-117 and Thr-163 each coordinate ATP. Gly-190 lines the substrate pocket.

Belongs to the Thz kinase family. Mg(2+) is required as a cofactor.

It catalyses the reaction 5-(2-hydroxyethyl)-4-methylthiazole + ATP = 4-methyl-5-(2-phosphooxyethyl)-thiazole + ADP + H(+). It participates in cofactor biosynthesis; thiamine diphosphate biosynthesis; 4-methyl-5-(2-phosphoethyl)-thiazole from 5-(2-hydroxyethyl)-4-methylthiazole: step 1/1. Its function is as follows. Catalyzes the phosphorylation of the hydroxyl group of 4-methyl-5-beta-hydroxyethylthiazole (THZ). The protein is Hydroxyethylthiazole kinase of Exiguobacterium sp. (strain ATCC BAA-1283 / AT1b).